We begin with the raw amino-acid sequence, 267 residues long: Putative carboxymethylenebutenolidase (267 aa).

Catalysis depends on residues Cys-137, Asp-194, and His-226.

This sequence belongs to the dienelactone hydrolase family.

It carries out the reaction 2-(5-oxo-2,5-dihydrofuran-2-ylidene)acetate + H2O = 4-oxohex-2-enedioate + H(+). The chain is Putative carboxymethylenebutenolidase from Yersinia pestis.